The chain runs to 380 residues: Glutamyl-tRNA reductase 1 (380 aa).

Substrate is bound by residues 42–45, serine 93, 98–100, and glutamine 104; these read TCNR and ETD. Cysteine 43 serves as the catalytic Nucleophile. 172–177 serves as a coordination point for NADP(+); that stretch reads GAGAVG.

It belongs to the glutamyl-tRNA reductase family. As to quaternary structure, homodimer.

The enzyme catalyses (S)-4-amino-5-oxopentanoate + tRNA(Glu) + NADP(+) = L-glutamyl-tRNA(Glu) + NADPH + H(+). The protein operates within porphyrin-containing compound metabolism; protoporphyrin-IX biosynthesis; 5-aminolevulinate from L-glutamyl-tRNA(Glu): step 1/2. Its function is as follows. Catalyzes the NADPH-dependent reduction of glutamyl-tRNA(Glu) to glutamate 1-semialdehyde (GSA). The chain is Glutamyl-tRNA reductase 1 from Pyrobaculum calidifontis (strain DSM 21063 / JCM 11548 / VA1).